Reading from the N-terminus, the 1004-residue chain is MGGEEKILVSVRVRPLNEKEKTRNDRCDWECINDTTIICKFHNLPDKSSYTFDKVFGFECPTKQVYDDGAKEVALCVLSGINSSIFAYGQTSSGKTYTMSGITEFAMDDIFAYIDKHKQERKFTLKFSAMEIYNEAVRDLLCEDSSTPLRLLDDPERGTVVEKLREETLRDRSHLEELLSICETQRKIGETSLNEISSRSHQILRLTIESSSQQFSPESSATLAASVCFVDLAGSERASQTLSAGSRLKEGCHINRSLLTLGTVIRKLSKGKNGHIPYRDSKLTRILQNSLGGNARTAIICTMSPARSHLEQSRNTLLFATCAKEVTTNAQVNLVVSEKALVKQLQRELARMENELKNLGPASASSTSDFYALMLKQKEELIAKMEEQIHELKWQRDVAQSRVENLLKSTAEERSSSSSMDSRRRRISYDSTDFDEPRMLNNLGKSNLYSPDEDGFLLDDTTPQFPGHNLHDKWEEMAQSTTQEPEDACKEVRCIEVNSGEAERVQIQDSLDDIVEKKEYEQNYESQKDDADSSIKNIDMELSLYTKPEAEDGVSVKKLIEDVQETEQSVEKQKQSPKKEEMEQYLSRDMSEQVTKSLPEEEQCVQEYGAYDKLEAQDVLTINKLEESQQTEQSVEKEDTKKNLSSKKEDLKQNLSMDQSEQLYKSPPEDEKCVEVYEGSDKDDNTYEALKKKVKEMQKTIEYFMSIQSAEEKQSPSFNIIDDTLSPGEYFKMRRSRSCRENLLFTKAAAAAASRGFIFETTNTSFDSDITVSMDAQSIKDSDTETSSSSFHEFMAGLRERTMQHHSTHSDDTDTKTMKPENTDDGGEKTEFERQQSQIIELWQVCNVPLVHRTYFFLLFKGDPSDFVYMEVELRRLSFLKDSTETSRKQTAKAVTREREWLAKQIPNKFGKKEKEEVYKKWGVELSSKRRSLQVTHKLWNNNTKDIEHCKESASLIATLVGFVDSTLTPKEMFGLSLTPTTFNIKPSSGWKFSNSFSRISFTG.

Residues Lys-6–Val-326 form the Kinesin motor domain. Gly-89–Thr-96 contributes to the ATP binding site. Coiled coils occupy residues Val-335 to Arg-402, Lys-517 to Ser-576, and Ser-634 to Glu-661. Disordered regions lie at residues Glu-567 to Pro-599, Ser-628 to Glu-671, and Thr-802 to Thr-830. 2 stretches are compositionally biased toward basic and acidic residues: residues Ser-569–Met-582 and Ser-634–Lys-652. A compositionally biased stretch (polar residues) spans Gln-653–Leu-663. A Glycyl lysine isopeptide (Lys-Gly) (interchain with G-Cter in ubiquitin) cross-link involves residue Lys-881.

Belongs to the TRAFAC class myosin-kinesin ATPase superfamily. Kinesin family. KIN-7 subfamily.

The protein is Kinesin-like protein KIN-7I of Arabidopsis thaliana (Mouse-ear cress).